Consider the following 271-residue polypeptide: 5-deoxy-glucuronate isomerase (271 aa).

It belongs to the isomerase IolB family.

The enzyme catalyses 5-deoxy-D-glucuronate = 5-dehydro-2-deoxy-D-gluconate. It functions in the pathway polyol metabolism; myo-inositol degradation into acetyl-CoA; acetyl-CoA from myo-inositol: step 4/7. In terms of biological role, involved in the isomerization of 5-deoxy-glucuronate (5DG) to 5-dehydro-2-deoxy-D-gluconate (DKG or 2-deoxy-5-keto-D-gluconate). This chain is 5-deoxy-glucuronate isomerase, found in Bacillus subtilis subsp. natto.